We begin with the raw amino-acid sequence, 369 residues long: tRNA-specific 2-thiouridylase MnmA (369 aa).

ATP contacts are provided by residues 12-19 (GMSGGVDS) and methionine 38. The tract at residues 98–100 (NPD) is interaction with target base in tRNA. Cysteine 103 functions as the Nucleophile in the catalytic mechanism. Cysteine 103 and cysteine 200 are joined by a disulfide. Residue glycine 128 participates in ATP binding. Residues 150–152 (KDQ) are interaction with tRNA. Catalysis depends on cysteine 200, which acts as the Cysteine persulfide intermediate. An interaction with tRNA region spans residues 312–313 (RY).

Belongs to the MnmA/TRMU family.

It localises to the cytoplasm. It catalyses the reaction S-sulfanyl-L-cysteinyl-[protein] + uridine(34) in tRNA + AH2 + ATP = 2-thiouridine(34) in tRNA + L-cysteinyl-[protein] + A + AMP + diphosphate + H(+). Functionally, catalyzes the 2-thiolation of uridine at the wobble position (U34) of tRNA, leading to the formation of s(2)U34. The protein is tRNA-specific 2-thiouridylase MnmA of Tolumonas auensis (strain DSM 9187 / NBRC 110442 / TA 4).